We begin with the raw amino-acid sequence, 130 residues long: Biotin carboxyl carrier protein (130 aa).

The interval 20–64 (EISESSVPAATPITPTTENTRAASDQKQQSQTPSPAATASAANTM) is disordered. The span at 23–46 (ESSVPAATPITPTTENTRAASDQK) shows a compositional bias: polar residues. A compositionally biased stretch (low complexity) spans 47 to 64 (QQSQTPSPAATASAANTM). Residues 55-130 (AATASAANTM…NAGDNLITIA (76 aa)) enclose the Biotinyl-binding domain. An N6-biotinyllysine modification is found at Lys-96.

This chain is Biotin carboxyl carrier protein (bcc), found in Streptococcus mutans serotype c (strain ATCC 700610 / UA159).